The sequence spans 272 residues: SPbeta prophage-derived aminoglycoside N(3')-acetyltransferase-like protein YokD (272 aa).

Residues 38-44 (LSSIGWV) and Q113 each bind CoA.

This sequence belongs to the antibiotic N-acetyltransferase family. In terms of assembly, homodimer.

In terms of biological role, may contribute to antibiotic resistance. The polypeptide is SPbeta prophage-derived aminoglycoside N(3')-acetyltransferase-like protein YokD (yokD) (Bacillus subtilis (strain 168)).